The sequence spans 185 residues: Photosystem I assembly protein Ycf4 (185 aa).

2 consecutive transmembrane segments (helical) span residues 20–40 (GNFF…AVGA) and 57–77 (ILFF…LFIS).

Belongs to the Ycf4 family.

Its subcellular location is the plastid. It is found in the chloroplast thylakoid membrane. In terms of biological role, seems to be required for the assembly of the photosystem I complex. The sequence is that of Photosystem I assembly protein Ycf4 from Oryza nivara (Indian wild rice).